Reading from the N-terminus, the 90-residue chain is Movement protein (90 aa).

The helical transmembrane segment at 32-52 (FVFVTFGLLIAVGVAWLAYTL) threads the bilayer.

Belongs to the mastrevirus movement protein family. In terms of assembly, interacts with the capsid protein (CP). Part of a MP-CP-viral DNA complex.

Its subcellular location is the host membrane. Functionally, involved in the viral transport within, and between cells. The sequence is that of Movement protein from Wheat dwarf virus (isolate Sweden) (WDV).